Consider the following 445-residue polypeptide: Putative ATP-dependent RNA helicase L538 (445 aa).

The Helicase ATP-binding domain maps to 14–151; it reads IEFMKNNRGV…AVLVNIVRGE (138 aa). An ATP-binding site is contributed by 27 to 34; it reads HSTGAGKT. Positions 101 to 104 match the DEAH box motif; the sequence is DEAH. A Helicase C-terminal domain is found at 273–442; it reads KIEDIMKYII…VIDASIENNY (170 aa).

Belongs to the DEAD box helicase family. DEAH subfamily.

It localises to the virion. It catalyses the reaction ATP + H2O = ADP + phosphate + H(+). The sequence is that of Putative ATP-dependent RNA helicase L538 from Acanthamoeba polyphaga mimivirus (APMV).